A 797-amino-acid chain; its full sequence is MQNEYVDMNSSSEDSDGDSILEEGRLRPSFRGQQKERDMLGIFGEEDEDGFHNSGIGSARLRRKNISFVEKSEQVKANKQVTADDLLEAHSIPQLKNKNDEVSQAKNIPKMKFNTTGFGAKMLEKMGYKQGQGLGANAEGIAEPVQSKLRPERVGLGAVRERTEKQRKEAIARGEISDSEDEKHTVKQKPLREKKKKPLKSSEEISKDMGSYNLPRFLASLIDASLNDTKEIEFVTSNKEELGLEGRDMSTSGINQLSRLARVECEHHASAWQQLQARRAYVKMELKRVTTEFDEKSVEISRLEKLLGKVMEVKSRSMEFTVPEAEIDVIEKRLQPLNNLIETLPVEFSEASMHFELDSVAVSILAFVLSEPIKNWDVWKHPYFMLESFLSWKNSLYSKDFRPKREESSTFMDIDVEFDDELEGQSLTHYESFMMFVWKKKIGEELKKWIIQDSLKALQLLEAWDPVVPEKVKDSLIQDDILPRLKDAVSKWNPKLKLKKNDSLHHCIFPWLPYLEKHADSLLQSVLVQFSLILSPWKIKNGSIDDFSVWRSAFANDALDRLLEKVILPKLEKLMDEELVIDPSNQDLEIFFIILSWKGSFKAMVFGQLFADHFFPKWLETLYQWLTEAPNFDEASEWYTWWKSVFPKDLLSNAYIQQGFSKGLDMMNECLENKSITAPLPFAKDSTKGVNLQFSKEKHEFTAESDDTTSYDEPLVSFRELVEEFCAENSLLFVPLRRSHLSTGSALFRISTQASKARGITVYLRNDIIWKKSPGASEDTPYDPIGFNEILLMFNNN.

The span at 1–12 (MQNEYVDMNSSS) shows a compositional bias: polar residues. Disordered regions lie at residues 1 to 33 (MQNEYVDMNSSSEDSDGDSILEEGRLRPSFRGQ) and 159 to 204 (VRER…SSEE). The region spanning 115-161 (TTGFGAKMLEKMGYKQGQGLGANAEGIAEPVQSKLRPERVGLGAVRE) is the G-patch domain. The span at 159 to 185 (VRERTEKQRKEAIARGEISDSEDEKHT) shows a compositional bias: basic and acidic residues. Residues 186-199 (VKQKPLREKKKKPL) show a composition bias toward basic residues.

It belongs to the TFP11/STIP family.

Its subcellular location is the cytoplasm. It is found in the cytoskeleton. The protein localises to the microtubule organizing center. It localises to the spindle pole body. This chain is G-patch domain-containing protein C1486.03, found in Schizosaccharomyces pombe (strain 972 / ATCC 24843) (Fission yeast).